A 200-amino-acid chain; its full sequence is Ras-related protein Rab-10 (200 aa).

GTP is bound by residues S18, G19, V20, G21, K22, T23, C24, N35, T36, S40, and T41. Residue T23 coordinates Mg(2+). 2 short sequence motifs (switch) span residues 32 to 46 (DAFN…GIDF) and 64 to 81 (DTAG…YYRG). Mg(2+) contacts are provided by T41 and D64. G67, N122, K123, D125, M126, S152, A153, and K154 together coordinate GTP. The segment at 181-200 (RENVDISTTGGGTGLKKCCS) is disordered. Residues C198 and C199 are each lipidated (S-geranylgeranyl cysteine).

Belongs to the small GTPase superfamily. Rab family. Mg(2+) serves as cofactor.

It localises to the cytoplasmic vesicle membrane. It is found in the golgi apparatus. Its subcellular location is the trans-Golgi network membrane. The protein resides in the endosome membrane. The protein localises to the recycling endosome membrane. It localises to the cytoplasmic vesicle. It is found in the phagosome membrane. Its subcellular location is the cell projection. The protein resides in the cilium. The protein localises to the endoplasmic reticulum membrane. It carries out the reaction GTP + H2O = GDP + phosphate + H(+). Its activity is regulated as follows. Regulated by guanine nucleotide exchange factors (GEFs) which promote the exchange of bound GDP for free GTP. Regulated by GTPase activating proteins (GAPs) which increase the GTP hydrolysis activity. Inhibited by GDP dissociation inhibitors (GDIs) which prevent Rab-GDP dissociation. The small GTPases Rab are key regulators of intracellular membrane trafficking, from the formation of transport vesicles to their fusion with membranes. Rabs cycle between an inactive GDP-bound form and an active GTP-bound form that is able to recruit to membranes different set of downstream effectors directly responsible for vesicle formation, movement, tethering and fusion. That Rab is mainly involved in the biosynthetic transport of proteins from the Golgi to the plasma membrane. Also plays a specific role in asymmetric protein transport to the plasma membrane within the polarized neuron and epithelial cells. In neurons, it is involved in axonogenesis through regulation of vesicular membrane trafficking toward the axonal plasma membrane while in epithelial cells, it regulates transport from the Golgi to the basolateral membrane. Moreover, may play a role in the basolateral recycling pathway and in phagosome maturation. Finally, may play a role in endoplasmic reticulum dynamics and morphology controlling tubulation along microtubules and tubules fusion. May participate in the export of neosynthesized proteins through a Rab-dependent endosomal export route. The protein is Ras-related protein Rab-10 of Diplobatis ommata (Ocellated electric ray).